We begin with the raw amino-acid sequence, 92 residues long: Large ribosomal subunit protein bL27 (92 aa).

The disordered stretch occupies residues 1–20 (MAHKKAGGSTRNGRDSNPKY).

Belongs to the bacterial ribosomal protein bL27 family.

The sequence is that of Large ribosomal subunit protein bL27 from Legionella pneumophila (strain Paris).